An 89-amino-acid chain; its full sequence is Small ribosomal subunit protein uS15 (89 aa).

The protein belongs to the universal ribosomal protein uS15 family. Part of the 30S ribosomal subunit. Forms a bridge to the 50S subunit in the 70S ribosome, contacting the 23S rRNA.

In terms of biological role, one of the primary rRNA binding proteins, it binds directly to 16S rRNA where it helps nucleate assembly of the platform of the 30S subunit by binding and bridging several RNA helices of the 16S rRNA. Forms an intersubunit bridge (bridge B4) with the 23S rRNA of the 50S subunit in the ribosome. The protein is Small ribosomal subunit protein uS15 of Pseudomonas putida (strain ATCC 700007 / DSM 6899 / JCM 31910 / BCRC 17059 / LMG 24140 / F1).